Consider the following 284-residue polypeptide: CBY1-interacting BAR domain-containing protein 1-A (284 aa).

A mitochondrion-targeting transit peptide spans 1–48; sequence MSQTPEARARDNQTRQIQESVNNVEKHFGELCQIFAGYVRKTARLRDK. The interval 11-221 is BAR-like; the sequence is DNQTRQIQES…DIDEEEDLEV (211 aa). 2 coiled-coil regions span residues 142 to 184 and 260 to 284; these read RQII…IKKL and NRQK…EDEN. Polar residues predominate over residues 242 to 261; that stretch reads SRTGSTSRGPSVISQPPGNR. Residues 242-284 form a disordered region; the sequence is SRTGSTSRGPSVISQPPGNRQKNRIEDEDEEEEDDENSTEDEN. The span at 267-284 shows a compositional bias: acidic residues; it reads EDEDEEEEDDENSTEDEN.

The protein belongs to the CIBAR family.

The protein resides in the cytoplasm. The protein localises to the cytoskeleton. It is found in the microtubule organizing center. Its subcellular location is the centrosome. It localises to the centriole. The protein resides in the nucleus. The protein localises to the mitochondrion inner membrane. It is found in the cell projection. Its subcellular location is the cilium. It localises to the flagellum. Plays a critical role in regulating mitochondrial ultrastructure and function by maintaining the integrity of mitochondrial morphology, particularly the organization of cristae. Plays a crucial role in ciliogenesis. Plays a key role in the correct positioning of the annulus, a septin-based ring structure in the sperm flagellum, serving both as a physical barrier and a membrane diffusion barrier that separates the midpiece (MP) from the principal piece (PP). This is CBY1-interacting BAR domain-containing protein 1-A from Xenopus laevis (African clawed frog).